The chain runs to 455 residues: Glutamyl-tRNA reductase (455 aa).

Residues 49–52 (TCNR), S109, 114–116 (ETQ), and Q120 contribute to the substrate site. Catalysis depends on C50, which acts as the Nucleophile. Residue 189-194 (GAGKMG) coordinates NADP(+).

This sequence belongs to the glutamyl-tRNA reductase family. Homodimer.

The catalysed reaction is (S)-4-amino-5-oxopentanoate + tRNA(Glu) + NADP(+) = L-glutamyl-tRNA(Glu) + NADPH + H(+). It functions in the pathway porphyrin-containing compound metabolism; protoporphyrin-IX biosynthesis; 5-aminolevulinate from L-glutamyl-tRNA(Glu): step 1/2. In terms of biological role, catalyzes the NADPH-dependent reduction of glutamyl-tRNA(Glu) to glutamate 1-semialdehyde (GSA). In Bacillus pumilus (strain SAFR-032), this protein is Glutamyl-tRNA reductase.